The sequence spans 336 residues: Ribosomal RNA large subunit methyltransferase F (336 aa).

It belongs to the methyltransferase superfamily. METTL16/RlmF family.

The protein resides in the cytoplasm. It catalyses the reaction adenosine(1618) in 23S rRNA + S-adenosyl-L-methionine = N(6)-methyladenosine(1618) in 23S rRNA + S-adenosyl-L-homocysteine + H(+). Functionally, specifically methylates the adenine in position 1618 of 23S rRNA. The protein is Ribosomal RNA large subunit methyltransferase F of Yersinia pseudotuberculosis serotype I (strain IP32953).